A 64-amino-acid polypeptide reads, in one-letter code: Prokaryotic ubiquitin-like protein Pup (64 aa).

The disordered stretch occupies residues 1-36 (MAQEQTKRGGGGGDDEDVTGTTAAGQERRKKLAQDT). Residues 21–58 (TTAAGQERRKKLAQDTDDLLDEIDDVLEENAEDFVRAY) form an ARC ATPase binding region. Residues 26–52 (QERRKKLAQDTDDLLDEIDDVLEENAE) adopt a coiled-coil conformation. Gln64 carries the post-translational modification Deamidated glutamine. Residue Gln64 forms an Isoglutamyl lysine isopeptide (Gln-Lys) (interchain with K-? in acceptor proteins) linkage.

Belongs to the prokaryotic ubiquitin-like protein family. As to quaternary structure, strongly interacts with the proteasome-associated ATPase ARC through a hydrophobic interface; the interacting region of Pup lies in its C-terminal half. There is one Pup binding site per ARC hexamer ring. In terms of processing, is modified by deamidation of its C-terminal glutamine to glutamate by the deamidase Dop, a prerequisite to the subsequent pupylation process.

It participates in protein degradation; proteasomal Pup-dependent pathway. In terms of biological role, protein modifier that is covalently attached to lysine residues of substrate proteins, thereby targeting them for proteasomal degradation. The tagging system is termed pupylation. This Mycobacterium ulcerans (strain Agy99) protein is Prokaryotic ubiquitin-like protein Pup.